The following is a 39-amino-acid chain: Contryphan-Cal2 (39 aa).

Residues 1-20 (MTRTAVLLLTLLFLVAMAAS) form the signal peptide. C29 and C35 form a disulfide bridge.

As to expression, expressed by the venom duct.

It localises to the secreted. Probable neurotoxin. The polypeptide is Contryphan-Cal2 (Californiconus californicus (California cone)).